The chain runs to 157 residues: Small ribosomal subunit protein uS7 (157 aa).

It belongs to the universal ribosomal protein uS7 family. As to quaternary structure, part of the 30S ribosomal subunit. Contacts proteins S9 and S11.

Functionally, one of the primary rRNA binding proteins, it binds directly to 16S rRNA where it nucleates assembly of the head domain of the 30S subunit. Is located at the subunit interface close to the decoding center, probably blocks exit of the E-site tRNA. This chain is Small ribosomal subunit protein uS7, found in Leptospira interrogans serogroup Icterohaemorrhagiae serovar copenhageni (strain Fiocruz L1-130).